The primary structure comprises 580 residues: TRAF-type zinc finger domain-containing protein 1 (580 aa).

Ala-2 is modified (N-acetylalanine). The TRAF-type zinc-finger motif lies at 27-103 (IHEIHCQRNI…DLELSVVKLK (77 aa)). Phosphoserine is present on residues Ser-278, Ser-320, Ser-326, Ser-327, Ser-409, Ser-415, Ser-430, Ser-450, Ser-469, and Ser-532. Disordered regions lie at residues 395-453 (TANH…SPNR), 468-509 (PSGP…ASGH), and 524-580 (FAPS…EEEE). Positions 407 to 417 (QDSQPENTSAE) are enriched in polar residues.

In terms of assembly, interacts with MAVS, TICAM1, TRAF1, TRAF2, TRAF3 and TRAF6. Expressed in skeletal muscle, brain, liver, kidney, spleen and bone marrow. Expression depends on STAT1.

Negative feedback regulator that controls excessive innate immune responses. Regulates both Toll-like receptor 4 (TLR4) and DDX58/RIG1-like helicases (RLH) pathways. May inhibit the LTR pathway by direct interaction with TRAF6 and attenuation of NF-kappa-B activation. May negatively regulate the RLH pathway downstream from MAVS and upstream of NF-kappa-B and IRF3. The chain is TRAF-type zinc finger domain-containing protein 1 (Trafd1) from Mus musculus (Mouse).